Consider the following 806-residue polypeptide: Leucine--tRNA ligase (806 aa).

Residues 54 to 64 (SYPSGDLHMGH) carry the 'HIGH' region motif. Positions 571–575 (KMSKS) match the 'KMSKS' region motif. K574 is a binding site for ATP.

Belongs to the class-I aminoacyl-tRNA synthetase family.

It is found in the cytoplasm. It catalyses the reaction tRNA(Leu) + L-leucine + ATP = L-leucyl-tRNA(Leu) + AMP + diphosphate. This is Leucine--tRNA ligase from Tropheryma whipplei (strain Twist) (Whipple's bacillus).